Reading from the N-terminus, the 855-residue chain is DNA mismatch repair protein MutS (855 aa).

613-620 (GPNMGGKS) provides a ligand contact to ATP. Positions 796 to 816 (TTSLPHEMPSQQSGKPASPMQ) are disordered.

This sequence belongs to the DNA mismatch repair MutS family.

Functionally, this protein is involved in the repair of mismatches in DNA. It is possible that it carries out the mismatch recognition step. This protein has a weak ATPase activity. This Pseudomonas aeruginosa (strain LESB58) protein is DNA mismatch repair protein MutS.